Consider the following 464-residue polypeptide: NADH-ubiquinone oxidoreductase chain 4 (464 aa).

Transmembrane regions (helical) follow at residues 18–38 (LLPT…VLPT), 54–74 (IADI…IANW), 79–99 (SLLY…NFMC), 102–122 (MLSF…LIGL), 131–151 (AADY…LAIG), 168–188 (VVLS…GIMV), 207–227 (PLAG…YAII), 239–259 (VLYT…TSII), 266–286 (LKVI…LGIL), 297–317 (LILS…VGGI), 332–352 (GLLT…FSNI), 375–395 (TILG…MLKV), and 420–440 (LLMI…NGII).

It belongs to the complex I subunit 4 family.

Its subcellular location is the mitochondrion membrane. The catalysed reaction is a ubiquinone + NADH + 5 H(+)(in) = a ubiquinol + NAD(+) + 4 H(+)(out). Its function is as follows. Core subunit of the mitochondrial membrane respiratory chain NADH dehydrogenase (Complex I) that is believed to belong to the minimal assembly required for catalysis. Complex I functions in the transfer of electrons from NADH to the respiratory chain. The immediate electron acceptor for the enzyme is believed to be ubiquinone. This Candida albicans (strain SC5314 / ATCC MYA-2876) (Yeast) protein is NADH-ubiquinone oxidoreductase chain 4 (NAD4).